We begin with the raw amino-acid sequence, 302 residues long: Phospho-N-acetylmuramoyl-pentapeptide-transferase (302 aa).

10 helical membrane passes run 1–21 (MIAANFLLNLFLYPILIKLFR), 42–62 (GTPTMGGILFVLTGFLFGMIS), 67–87 (MVLLGMFLFFLIGFLDDFLSV), 95–115 (LKTYQKALLQTLAAFIMLLLI), 123–143 (FFGSTIEMGKWYYLFALLVIV), 154–174 (GLDGLAGWIYVSGSIPYWFFL), 178–198 (GVSEDILLILGVGVLAFLVFN), 204–224 (IFMGDTGSITLGGVLGTVSVL), 229–249 (FYLVLFFMIPVIETLSVILQV), and 279–299 (IVAVFTVFNLISSLVALEIFG).

This sequence belongs to the glycosyltransferase 4 family. MraY subfamily. Requires Mg(2+) as cofactor.

It localises to the cell inner membrane. The enzyme catalyses UDP-N-acetyl-alpha-D-muramoyl-L-alanyl-gamma-D-glutamyl-meso-2,6-diaminopimeloyl-D-alanyl-D-alanine + di-trans,octa-cis-undecaprenyl phosphate = di-trans,octa-cis-undecaprenyl diphospho-N-acetyl-alpha-D-muramoyl-L-alanyl-D-glutamyl-meso-2,6-diaminopimeloyl-D-alanyl-D-alanine + UMP. The protein operates within cell wall biogenesis; peptidoglycan biosynthesis. In terms of biological role, catalyzes the initial step of the lipid cycle reactions in the biosynthesis of the cell wall peptidoglycan: transfers peptidoglycan precursor phospho-MurNAc-pentapeptide from UDP-MurNAc-pentapeptide onto the lipid carrier undecaprenyl phosphate, yielding undecaprenyl-pyrophosphoryl-MurNAc-pentapeptide, known as lipid I. This is Phospho-N-acetylmuramoyl-pentapeptide-transferase from Thermotoga maritima (strain ATCC 43589 / DSM 3109 / JCM 10099 / NBRC 100826 / MSB8).